Here is a 408-residue protein sequence, read N- to C-terminus: Multidrug resistance protein MdtG (408 aa).

A run of 10 helical transmembrane segments spans residues 16–36 (LIVAWLGCFLTGAAFSLVMPF), 58–78 (IVFSITFLFSAIASPFWGGLA), 92–112 (LGMGIVMVLMGLAQNIWQFLI), 115–135 (ALLGLLGGFVPNANALIATQV), 146–166 (TLSTGGVSGALLGPMAGGLLA), 173–193 (PVFFITASVLILCFFVTLFCI), 224–244 (LFVTTLIIQVATGSIAPILTL), 256–276 (VAFISGMIASVPGVAALLSAP), 290–310 (ILITALIFSVLLLIPMSYVQT), and 378–398 (AVFLVTAGVVLFNAVYSWNSL).

The protein belongs to the major facilitator superfamily. DHA1 family. MdtG (TC 2.A.1.2.20) subfamily.

The protein localises to the cell inner membrane. In terms of biological role, confers resistance to fosfomycin and deoxycholate. In Escherichia coli O17:K52:H18 (strain UMN026 / ExPEC), this protein is Multidrug resistance protein MdtG.